Reading from the N-terminus, the 86-residue chain is UPF0297 protein SAHV_1604 (86 aa).

Belongs to the UPF0297 family.

The polypeptide is UPF0297 protein SAHV_1604 (Staphylococcus aureus (strain Mu3 / ATCC 700698)).